Consider the following 490-residue polypeptide: Limb region 1 protein (490 aa).

Over 1-19 (MEGQDEVSAREQHFHSQVR) the chain is Extracellular. Residues 20-40 (ESTICFLLFAILYIVSYFIII) traverse the membrane as a helical segment. Residues 41–62 (RYKRKSDEQEDEDAVVNRISLF) lie on the Cytoplasmic side of the membrane. A helical transmembrane segment spans residues 63 to 83 (LSTFTLAVSAGAVLLLPFSII). Over 84-110 (SNEILLAFPHNYYIQWLNGSLIHGLWN) the chain is Extracellular. The helical transmembrane segment at 111–131 (LASLFSNLCLFVLMPFAFFFL) threads the bilayer. The Cytoplasmic segment spans residues 132 to 151 (ESEGFAGLKKGIRARILETL). Residues 152–172 (VMLLLLALLILGMVWVASALI) form a helical membrane-spanning segment. Topologically, residues 173 to 187 (DSDAASMESLYDLWE) are extracellular. The chain crosses the membrane as a helical span at residues 188 to 208 (FYLPYLYSCISLMGCLLLLLC). Topologically, residues 209–291 (TPVGLSRMFT…RKKASAWERN (83 aa)) are cytoplasmic. A coiled-coil region spans residues 256-287 (SSVEYNVMELEQELENVKILKTKLERRKKASA). The helical transmembrane segment at 292 to 312 (LVYPAVMVLLLIETSISVLLV) threads the bilayer. The Extracellular segment spans residues 313-339 (ACNILCLLVDETAMPKGTRGPGIGSAS). Residues 340-360 (LSTFGFVGAALEIILIFYLMV) traverse the membrane as a helical segment. Over 361-383 (SSVVGFYSLRFFGNFTPKKDDTT) the chain is Cytoplasmic. The helical transmembrane segment at 384-404 (MTKIIGNCVSILVLSSALPVM) threads the bilayer. At 405–426 (SRTLGITRFDLLGDFGRFNWLG) the chain is on the extracellular side. A helical transmembrane segment spans residues 427–447 (NFYIVLSYNLLFAIMTTLCLI). At 448–490 (RKFTSAVREELFKALGLHKLHLSDTSRDSETTKPSANGHQKAL) the chain is on the cytoplasmic side.

It belongs to the LIMR family.

The protein resides in the membrane. Its function is as follows. Putative membrane receptor. The sequence is that of Limb region 1 protein (Lmbr1) from Mus musculus (Mouse).